The chain runs to 291 residues: Endo-1,4-beta-xylanase 11B (291 aa).

Positions 1–19 (MVAFSSLFLGASIAATALA) are cleaved as a signal peptide. In terms of domain architecture, GH11 spans 34 to 222 (TYTQSATGTH…SSGSARINVG (189 aa)). The N-linked (GlcNAc...) asparagine glycan is linked to Asn-93. The active-site Nucleophile is Glu-118. Residue Glu-209 is the Proton donor of the active site. The disordered stretch occupies residues 223-246 (GGSTGGGNNGGGNNGGNPGGNPGG). In terms of domain architecture, CBM1 spans 255 to 291 (NCSPRWGQCGGQGWNGPTCCESGTTCRQQNQWYSQCL).

This sequence belongs to the glycosyl hydrolase 11 (cellulase G) family.

It is found in the secreted. The enzyme catalyses Endohydrolysis of (1-&gt;4)-beta-D-xylosidic linkages in xylans.. It participates in glycan degradation; xylan degradation. With respect to regulation, the activity iss completely inhibited by Hg(2+), a metal ion that interacts with Trp and oxidizes the indole ring, and is significantly enhanced by beta-mercaptoethanol, which counteracts the oxidation effects of the S-S linkage between Cys residues. In terms of biological role, endo-1,4-beta-xylanase involved in the hydrolysis of xylan, a major structural heterogeneous polysaccharide found in plant biomass representing the second most abundant polysaccharide in the biosphere, after cellulose. Shows maximum activity on soluble wheat arabinoxylan (defined as 100%), moderate activity on birchwood xylan (80.5%) and beechwood xylan (76.2%), and weak activity on insoluble wheat arabinoxylan (7.0%). Has no activity towards glucan or carboxymethyl cellulose-sodium (CMC-Na). In Humicola insolens (Soft-rot fungus), this protein is Endo-1,4-beta-xylanase 11B.